A 151-amino-acid polypeptide reads, in one-letter code: MAKLQVSLKARALRYLSAREHSRQELARKLARYAQEGDDIEALLDTLEAANFMSEARFSESLVNRRAARFGNSRILSELKSHNIDPDSLTEIKAALAQDEVARAREVWTRKFGVAASDANGRAKQMRFLLQRGFSHRAIQAAMRAKEENED.

The protein belongs to the RecX family.

It localises to the cytoplasm. In terms of biological role, modulates RecA activity. The chain is Regulatory protein RecX from Herminiimonas arsenicoxydans.